A 189-amino-acid polypeptide reads, in one-letter code: Alanine and glycine-rich protein (189 aa).

Positions 127–160 (AGAGGGSGGGGGGGSGSGGSGGSGGSGGSGGNDG) are enriched in gly residues. The interval 127 to 170 (AGAGGGSGGGGGGGSGSGGSGGSGGSGGSGGNDGNDGNDGSSSR) is disordered.

In terms of tissue distribution, component of the organic matrix of calcified shell layers like nacre and prisms.

It is found in the secreted. The sequence is that of Alanine and glycine-rich protein from Mytilus californianus (California mussel).